Consider the following 756-residue polypeptide: 5-methyltetrahydropteroyltriglutamate--homocysteine methyltransferase (756 aa).

5-methyltetrahydropteroyltri-L-glutamate contacts are provided by residues 16–19 (RELK) and Lys-112. L-homocysteine-binding positions include 432-434 (IGS) and Glu-485. Residues 432-434 (IGS) and Glu-485 contribute to the L-methionine site. 5-methyltetrahydropteroyltri-L-glutamate contacts are provided by residues 516-517 (RC) and Trp-562. Asp-600 lines the L-homocysteine pocket. Asp-600 provides a ligand contact to L-methionine. Residue Glu-606 coordinates 5-methyltetrahydropteroyltri-L-glutamate. Zn(2+)-binding residues include His-642, Cys-644, and Glu-666. His-695 acts as the Proton donor in catalysis. Cys-727 contacts Zn(2+).

The protein belongs to the vitamin-B12 independent methionine synthase family. Requires Zn(2+) as cofactor.

The enzyme catalyses 5-methyltetrahydropteroyltri-L-glutamate + L-homocysteine = tetrahydropteroyltri-L-glutamate + L-methionine. The protein operates within amino-acid biosynthesis; L-methionine biosynthesis via de novo pathway; L-methionine from L-homocysteine (MetE route): step 1/1. Catalyzes the transfer of a methyl group from 5-methyltetrahydrofolate to homocysteine resulting in methionine formation. The protein is 5-methyltetrahydropteroyltriglutamate--homocysteine methyltransferase of Haemophilus influenzae (strain PittEE).